Here is a 127-residue protein sequence, read N- to C-terminus: Small ribosomal subunit protein uS13 (127 aa).

The disordered stretch occupies residues 92 to 127 (HRQGLPVRGQRTRTNARTRRGRRLTVAGKKKAPSKK). A compositionally biased stretch (basic residues) spans 101–127 (QRTRTNARTRRGRRLTVAGKKKAPSKK).

The protein belongs to the universal ribosomal protein uS13 family. In terms of assembly, part of the 30S ribosomal subunit. Forms a loose heterodimer with protein S19. Forms two bridges to the 50S subunit in the 70S ribosome.

Its function is as follows. Located at the top of the head of the 30S subunit, it contacts several helices of the 16S rRNA. In the 70S ribosome it contacts the 23S rRNA (bridge B1a) and protein L5 of the 50S subunit (bridge B1b), connecting the 2 subunits; these bridges are implicated in subunit movement. Contacts the tRNAs in the A and P-sites. The chain is Small ribosomal subunit protein uS13 from Gloeothece citriformis (strain PCC 7424) (Cyanothece sp. (strain PCC 7424)).